The chain runs to 177 residues: ATP synthase subunit delta (177 aa).

This sequence belongs to the ATPase delta chain family. As to quaternary structure, F-type ATPases have 2 components, F(1) - the catalytic core - and F(0) - the membrane proton channel. F(1) has five subunits: alpha(3), beta(3), gamma(1), delta(1), epsilon(1). F(0) has three main subunits: a(1), b(2) and c(10-14). The alpha and beta chains form an alternating ring which encloses part of the gamma chain. F(1) is attached to F(0) by a central stalk formed by the gamma and epsilon chains, while a peripheral stalk is formed by the delta and b chains.

It localises to the cell inner membrane. F(1)F(0) ATP synthase produces ATP from ADP in the presence of a proton or sodium gradient. F-type ATPases consist of two structural domains, F(1) containing the extramembraneous catalytic core and F(0) containing the membrane proton channel, linked together by a central stalk and a peripheral stalk. During catalysis, ATP synthesis in the catalytic domain of F(1) is coupled via a rotary mechanism of the central stalk subunits to proton translocation. Functionally, this protein is part of the stalk that links CF(0) to CF(1). It either transmits conformational changes from CF(0) to CF(1) or is implicated in proton conduction. The polypeptide is ATP synthase subunit delta (Leptothrix cholodnii (strain ATCC 51168 / LMG 8142 / SP-6) (Leptothrix discophora (strain SP-6))).